Consider the following 509-residue polypeptide: Methylthioalkylmalate synthase 1-1, chloroplastic (509 aa).

The N-terminal 55 residues, M1–Y55, are a transit peptide targeting the chloroplast. Residues V91–M365 form the Pyruvate carboxyltransferase domain. Mn(2+)-binding residues include D100, H298, and H300.

The protein belongs to the alpha-IPM synthase/homocitrate synthase family. In terms of assembly, monomer. Mn(2+) serves as cofactor. Requires Co(2+) as cofactor.

Its subcellular location is the plastid. It is found in the chloroplast. The enzyme catalyses 4-methylsulfanyl-2-oxobutanoate + acetyl-CoA + H2O = 2-(2-methylsulfanyl)ethylmalate + CoA + H(+). It participates in secondary metabolite biosynthesis. With respect to regulation, inhibited by EDTA, Cu(2+) and Zn(2+). Its function is as follows. Determines the side chain length of aliphatic glucosinolate structures. Involved in the biosynthesis of glucosinolate derivative natural products such as 6-(methylsulfinyl)hexylisothiocyanate (6-MSITC), a compound found in wasabi with diverse health-promoting properties. Catalyzes the conversion of 4-methylsulfanyl-2-oxobutanoate (4-MTOB) into 2-(2-methylsulfanyl)ethylmalate (2-(2-MT)EM). The polypeptide is Methylthioalkylmalate synthase 1-1, chloroplastic (Eutrema japonicum (Wasabi plant)).